The primary structure comprises 704 residues: UvrABC system protein B (704 aa).

The Helicase ATP-binding domain maps to 35–188 (ERINNGEKDV…DDLLRKFVSM (154 aa)). 48 to 55 (GATGTGKS) contributes to the ATP binding site. A Beta-hairpin motif is present at residues 101–124 (YYDYYQPEAYVAQTDTFIEKDSSI). Positions 438 to 604 (QIDDLLGEIR…PLRKKIADIT (167 aa)) constitute a Helicase C-terminal domain. One can recognise a UVR domain in the interval 659-694 (VGMIAQLTEQMHGAAAELQFEVAARIRDEVSELKKE).

Belongs to the UvrB family. As to quaternary structure, forms a heterotetramer with UvrA during the search for lesions. Interacts with UvrC in an incision complex.

The protein resides in the cytoplasm. In terms of biological role, the UvrABC repair system catalyzes the recognition and processing of DNA lesions. A damage recognition complex composed of 2 UvrA and 2 UvrB subunits scans DNA for abnormalities. Upon binding of the UvrA(2)B(2) complex to a putative damaged site, the DNA wraps around one UvrB monomer. DNA wrap is dependent on ATP binding by UvrB and probably causes local melting of the DNA helix, facilitating insertion of UvrB beta-hairpin between the DNA strands. Then UvrB probes one DNA strand for the presence of a lesion. If a lesion is found the UvrA subunits dissociate and the UvrB-DNA preincision complex is formed. This complex is subsequently bound by UvrC and the second UvrB is released. If no lesion is found, the DNA wraps around the other UvrB subunit that will check the other stand for damage. In Pseudarthrobacter chlorophenolicus (strain ATCC 700700 / DSM 12829 / CIP 107037 / JCM 12360 / KCTC 9906 / NCIMB 13794 / A6) (Arthrobacter chlorophenolicus), this protein is UvrABC system protein B.